A 427-amino-acid chain; its full sequence is UPF0229 protein YeaH (427 aa).

The segment covering 79-90 (NDHFVQNDRIER) has biased composition (basic and acidic residues). Residues 79-110 (NDHFVQNDRIERPQGGGGGSGSGQGQASQDGE) are disordered. The span at 92–102 (QGGGGGSGSGQ) shows a compositional bias: gly residues.

It belongs to the UPF0229 family.

In Escherichia coli O139:H28 (strain E24377A / ETEC), this protein is UPF0229 protein YeaH.